The following is a 328-amino-acid chain: MTYSRNIFIPLTRACRNRCGYCTFRSDTPEPPLLEPEDVMGEVRRALSLGCTEALFTFGEDAHEFPGVRDKLESLGFGDMTDYTYHLCELTLDAGLLPHTNMGVIGYRELRMLKEVNASMGLMLESASPRLMETEAHRESPGKNPRLRIKMIEDAGRLRIPFTTGLLIGIGETIEERAESLLELRRIQDRYGHIQEIIIQNFRSKPGIPMENQREPSLLEMVKMVAAAKIMFPDVSIQVPPNLNRETGEIFLLAGADDWGGVSPISRDYVNPEAPWPEIDELKRITESAGFALEERLPVYRKFISREFLSPRVMERIEELYPRFIETL.

Residues 1 to 242 form the Radical SAM core domain; sequence MTYSRNIFIP…PDVSIQVPPN (242 aa). 3 residues coordinate [4Fe-4S] cluster: C15, C19, and C22.

It belongs to the radical SAM superfamily. CofG family. In terms of assembly, consists of two subunits, CofG and CofH. It depends on [4Fe-4S] cluster as a cofactor.

It catalyses the reaction 5-amino-5-(4-hydroxybenzyl)-6-(D-ribitylimino)-5,6-dihydrouracil + S-adenosyl-L-methionine = 7,8-didemethyl-8-hydroxy-5-deazariboflavin + 5'-deoxyadenosine + L-methionine + NH4(+) + H(+). The protein operates within cofactor biosynthesis; coenzyme F0 biosynthesis. Its function is as follows. Catalyzes the radical-mediated synthesis of 7,8-didemethyl-8-hydroxy-5-deazariboflavin from 5-amino-5-(4-hydroxybenzyl)-6-(D-ribitylimino)-5,6-dihydrouracil. The sequence is that of 7,8-didemethyl-8-hydroxy-5-deazariboflavin synthase from Methanothermobacter thermautotrophicus (strain ATCC 29096 / DSM 1053 / JCM 10044 / NBRC 100330 / Delta H) (Methanobacterium thermoautotrophicum).